Consider the following 466-residue polypeptide: Histidine--tRNA ligase (466 aa).

It belongs to the class-II aminoacyl-tRNA synthetase family. In terms of assembly, homodimer.

Its subcellular location is the cytoplasm. It carries out the reaction tRNA(His) + L-histidine + ATP = L-histidyl-tRNA(His) + AMP + diphosphate + H(+). This is Histidine--tRNA ligase from Xylella fastidiosa (strain M23).